Reading from the N-terminus, the 784-residue chain is Cas scaffolding protein family member 4 (784 aa).

An SH3 domain is found at 11 to 73 (PKALLARALY…PANRLQILEE (63 aa)). Residues Ser197, Ser246, Ser302, Ser373, and Ser387 each carry the phosphoserine modification. Residues 343–376 (TPNIYDVPRAMPDVPQAGKELGKAGGPSENSVDH) form a disordered region. A coiled-coil region spans residues 466–536 (RDSLEANIDA…LLETKERLES (71 aa)). Residues 614 to 635 (KEGESYQRKAPFQKQRASEQPP) form a disordered region.

Belongs to the CAS family. Interacts (via SH3 domain) with PTK2/FAK1 (via C-terminus). Phosphorylated on tyrosines by SRC.

It is found in the cytoplasm. Its subcellular location is the cytoskeleton. The protein localises to the cell junction. It localises to the focal adhesion. Functionally, docking protein that plays a role in tyrosine kinase-based signaling related to cell adhesion and cell spreading. Regulates PTK2/FAK1 activity, focal adhesion integrity, and cell spreading. The chain is Cas scaffolding protein family member 4 from Sus scrofa (Pig).